Here is a 504-residue protein sequence, read N- to C-terminus: Histidine ammonia-lyase (504 aa).

Residues 141-143 constitute a cross-link (5-imidazolinone (Ala-Gly)); the sequence is ASG. Serine 142 bears the 2,3-didehydroalanine (Ser) mark.

It belongs to the PAL/histidase family. In terms of processing, contains an active site 4-methylidene-imidazol-5-one (MIO), which is formed autocatalytically by cyclization and dehydration of residues Ala-Ser-Gly.

The protein resides in the cytoplasm. The catalysed reaction is L-histidine = trans-urocanate + NH4(+). Its pathway is amino-acid degradation; L-histidine degradation into L-glutamate; N-formimidoyl-L-glutamate from L-histidine: step 1/3. The protein is Histidine ammonia-lyase of Geobacillus kaustophilus (strain HTA426).